The following is a 511-amino-acid chain: Sulfate adenylyltransferase (511 aa).

Residues 1–167 are N-terminal; that stretch reads MPAPHGGILQ…LEAIQLPQHY (167 aa). A catalytic region spans residues 168 to 393; the sequence is DYPGLRKTPA…LRESNPPRPK (226 aa). Residue Q195 participates in sulfate binding. Residues 195 to 198 and 289 to 292 each bind ATP; these read QTRN and GRDH. Catalysis depends on residues T196, R197, and N198. R197 is a binding site for sulfate. Position 293 (A293) interacts with sulfate. V331 is an ATP binding site. Residues 394–511 are required for oligomerization; adenylyl-sulfate kinase-like; the sequence is QGFSIVLGNS…FLEDNGFFVF (118 aa).

The protein belongs to the sulfate adenylyltransferase family. Homohexamer. Dimer of trimers.

The protein localises to the cytoplasm. The catalysed reaction is sulfate + ATP + H(+) = adenosine 5'-phosphosulfate + diphosphate. It participates in sulfur metabolism; hydrogen sulfide biosynthesis; sulfite from sulfate: step 1/3. In terms of biological role, catalyzes the first intracellular reaction of sulfate assimilation, forming adenosine-5'-phosphosulfate (APS) from inorganic sulfate and ATP. Plays an important role in sulfate activation as a component of the biosynthesis pathway of sulfur-containing amino acids. The polypeptide is Sulfate adenylyltransferase (Saccharomyces cerevisiae (strain ATCC 204508 / S288c) (Baker's yeast)).